We begin with the raw amino-acid sequence, 567 residues long: Oxygen-dependent choline dehydrogenase (567 aa).

6-35 (DYIIVGAGSAGNTLATRLTEDEGVTVLLLE) is an FAD binding site. The active-site Proton acceptor is H475.

It belongs to the GMC oxidoreductase family. It depends on FAD as a cofactor.

The enzyme catalyses choline + A = betaine aldehyde + AH2. The catalysed reaction is betaine aldehyde + NAD(+) + H2O = glycine betaine + NADH + 2 H(+). Its pathway is amine and polyamine biosynthesis; betaine biosynthesis via choline pathway; betaine aldehyde from choline (cytochrome c reductase route): step 1/1. Involved in the biosynthesis of the osmoprotectant glycine betaine. Catalyzes the oxidation of choline to betaine aldehyde and betaine aldehyde to glycine betaine at the same rate. This Pseudomonas fluorescens (strain SBW25) protein is Oxygen-dependent choline dehydrogenase.